An 83-amino-acid chain; its full sequence is Small ribosomal subunit protein bS16 (83 aa).

The protein belongs to the bacterial ribosomal protein bS16 family.

This Shewanella putrefaciens (strain CN-32 / ATCC BAA-453) protein is Small ribosomal subunit protein bS16.